The following is a 496-amino-acid chain: Beta-amylase (496 aa).

Substrate contacts are provided by D54, H94, and D102. E187 serves as the catalytic Proton donor. Residues K296, H301, and T343 each coordinate substrate. The active-site Proton acceptor is E381. Substrate contacts are provided by residues 382–383 (NA) and R421.

This sequence belongs to the glycosyl hydrolase 14 family.

The catalysed reaction is Hydrolysis of (1-&gt;4)-alpha-D-glucosidic linkages in polysaccharides so as to remove successive maltose units from the non-reducing ends of the chains.. The sequence is that of Beta-amylase (BMY1) from Vigna unguiculata (Cowpea).